An 89-amino-acid chain; its full sequence is Envelope protein US9 (89 aa).

Basic and acidic residues predominate over residues Met1–Ser10. Residues Met1 to Pro21 form a disordered region. Residues Met1 to Leu66 are Intravirion-facing. Positions Tyr20–Ala23 match the Internalization motif motif. Residues Glu29–Glu38 are acidic. 2 positions are modified to phosphoserine; by host CK2: Ser33 and Ser35. Residues Val67–Leu87 form a helical; Signal-anchor for type II membrane protein membrane-spanning segment. At Leu88–Arg89 the chain is on the virion surface side.

The protein belongs to the alphaherpesvirinae envelope protein US9 family. Post-translationally, phosphorylated on serines within the acidic cluster, possibly by host CK2. Phosphorylation determines whether endocytosed viral US9 traffics to the trans-Golgi network or recycles to the cell membrane.

The protein resides in the virion membrane. It localises to the host Golgi apparatus membrane. The protein localises to the host smooth endoplasmic reticulum membrane. Its subcellular location is the host cell membrane. In terms of biological role, essential for the anterograde spread of the infection throughout the host nervous system. Together with the gE/gI heterodimer, US9 is involved in the sorting and transport of viral structural components toward axon tips. The chain is Envelope protein US9 from Homo sapiens (Human).